The primary structure comprises 941 residues: Bifunctional uridylyltransferase/uridylyl-removing enzyme (941 aa).

Residues 1 to 372 (MAKHDLSDAT…RFAHRPRRIP (372 aa)) are uridylyltransferase. The tract at residues 373–728 (GTPEFIEDRG…VRTHSFHAIT (356 aa)) is uridylyl-removing. In terms of domain architecture, HD spans 489-611 (VDEHLIRSVG…VQSLDRLRML (123 aa)). 2 consecutive ACT domains span residues 729–810 (EITV…EVIA) and 840–919 (VIEI…LREQ). Residues 916–941 (LREQMPSGIIAPAATKSPAAEKKARV) form a disordered region.

Belongs to the GlnD family. Mg(2+) serves as cofactor.

It catalyses the reaction [protein-PII]-L-tyrosine + UTP = [protein-PII]-uridylyl-L-tyrosine + diphosphate. The catalysed reaction is [protein-PII]-uridylyl-L-tyrosine + H2O = [protein-PII]-L-tyrosine + UMP + H(+). Uridylyltransferase (UTase) activity is inhibited by glutamine, while glutamine activates uridylyl-removing (UR) activity. Its function is as follows. Modifies, by uridylylation and deuridylylation, the PII regulatory proteins (GlnB and homologs), in response to the nitrogen status of the cell that GlnD senses through the glutamine level. Under low glutamine levels, catalyzes the conversion of the PII proteins and UTP to PII-UMP and PPi, while under higher glutamine levels, GlnD hydrolyzes PII-UMP to PII and UMP (deuridylylation). Thus, controls uridylylation state and activity of the PII proteins, and plays an important role in the regulation of nitrogen assimilation and metabolism. This is Bifunctional uridylyltransferase/uridylyl-removing enzyme from Allorhizobium ampelinum (strain ATCC BAA-846 / DSM 112012 / S4) (Agrobacterium vitis (strain S4)).